A 1448-amino-acid chain; its full sequence is ABC transporter G family member 9 (1448 aa).

Positions 16–28 are enriched in polar residues; it reads EGGSNLNINTPSG. The disordered stretch occupies residues 16 to 41; sequence EGGSNLNINTPSGMSDGDFNSGANSP. In terms of domain architecture, ABC transporter 1 spans 136-385; it reads LFKPSTWKIE…FLDLGFDCEP (250 aa). The ABC transmembrane type-2 1 domain occupies 490-717; it reads WGDKFSLVSR…APYDNSVRVC (228 aa). The next 7 membrane-spanning stretches (helical) occupy residues 494–514, 530–550, 579–599, 604–624, 634–654, 663–683, and 748–768; these read FSLV…GSVF, AIFA…FATF, IPLT…MFGL, GKFF…TNMF, LYVS…YCGY, PWFG…ALMA, and LNIF…MVAV. The region spanning 822–1066 is the ABC transporter 2 domain; sequence FTWENIKYTV…LTSYFERQGV (245 aa). 858–865 is an ATP binding site; that stretch reads GSSGAGKT. 6 consecutive transmembrane segments (helical) span residues 1157-1177, 1191-1211, 1233-1253, 1272-1292, 1299-1319, and 1422-1442; these read FYAY…GFTF, IFFI…VMVQ, FAIS…SVFF, FYFW…GGAI, MFLA…FCGV, and IAIL…FVYL. An ABC transmembrane type-2 2 domain is found at 1157-1389; it reads FYAYGSILQA…VPATGYVTNT (233 aa).

This sequence belongs to the ABC transporter superfamily. ABCG family. PDR (TC 3.A.1.205) subfamily.

The protein localises to the membrane. This chain is ABC transporter G family member 9 (abcG9), found in Dictyostelium discoideum (Social amoeba).